The following is a 177-amino-acid chain: Late embryogenesis abundant protein 1 (177 aa).

Positions 1–177 are disordered; it reads MASHDQSYKA…DKDHFPTNRH (177 aa). Basic and acidic residues predominate over residues 28-39; that stretch reads IEDKAQAAKEKA. Positions 40–89 are enriched in low complexity; that stretch reads QQAAQTAKDKTSQTAQAAKEKTQQTAQAAKEKTQQTAQAAKDETQQTAQA. A run of 4 repeats spans residues 53-63, 64-74, 75-85, and 86-96. The segment at 53-96 is 4 X 11 AA approximate tandem repeats of T-A-Q-A-A-K-E-K-T-Q-Q; the sequence is TAQAAKEKTQQTAQAAKEKTQQTAQAAKDETQQTAQAAKDKTQQ. Residues 90–117 show a composition bias toward basic and acidic residues; sequence AKDKTQQTTEATKEKAQDTTGRAREKGS. Residues 119-142 show a composition bias toward polar residues; it reads MGQSTKETAQSGKDNSAGFLQQTG. The segment covering 164-177 has biased composition (basic and acidic residues); that stretch reads NDDKDKDHFPTNRH.

The protein belongs to the LEA type 4 family. Highest expression is found in seeds. No expression detected in adult tissues.

In Cicer arietinum (Chickpea), this protein is Late embryogenesis abundant protein 1.